A 675-amino-acid chain; its full sequence is Cytoplasmic tyrosine-protein kinase BMX (675 aa).

The PH domain occupies 4-111; that stretch reads KSILEELLLK…WLKALQKEIR (108 aa). A Btk-type zinc finger spans residues 113-149; that stretch reads NPHLLVKYHSGFFVDGKFLCCQQSCKAAPGCTLWEAY. Residues H121, C132, C133, and C143 each coordinate Zn(2+). Residues Y216 and Y224 each carry the phosphotyrosine; by autocatalysis modification. Residues 296 to 392 form the SH2 domain; it reads WFAGNISRSQ…GMITRLRHPV (97 aa). The Protein kinase domain maps to 417–675; the sequence is ITLLKELGSG…IEPLREKDKH (259 aa). Residues 423-431 and K445 each bind ATP; that span reads LGSGQFGVV. Catalysis depends on D536, which acts as the Proton acceptor. Residue Y566 is modified to Phosphotyrosine; by SRC and autocatalysis. A CAV1-binding motif is present at residues 596–603; it reads WAFGILMW.

This sequence belongs to the protein kinase superfamily. Tyr protein kinase family. TEC subfamily. As to quaternary structure, interacts with BCAR1, CAV1, MYD88, PTK2/FAK1, RUFY1, RUFY2, STAT3, TIRAP and TNFRSF1B. Requires Zn(2+) as cofactor. Phosphorylated in response to protein I/II and to LPS. Phosphorylation at Tyr-566 by SRC and by autocatalysis leads to activation and is required for STAT3 phosphorylation by BMX. Highly expressed in cells with great migratory potential, including endothelial cells and metastatic carcinoma cell lines.

It is found in the cytoplasm. The catalysed reaction is L-tyrosyl-[protein] + ATP = O-phospho-L-tyrosyl-[protein] + ADP + H(+). With respect to regulation, TEK and vascular endothelial growth factor receptor 1 (FLT1) stimulate BMX tyrosine kinase activity. Activated by integrins through the mediation of PTK2/FAK1. Activated by TNF through the mediation of TNFRSF1B. In terms of biological role, non-receptor tyrosine kinase that plays central but diverse modulatory roles in various signaling processes involved in the regulation of actin reorganization, cell migration, cell proliferation and survival, cell adhesion, and apoptosis. Participates in signal transduction stimulated by growth factor receptors, cytokine receptors, G-protein coupled receptors, antigen receptors and integrins. Induces tyrosine phosphorylation of BCAR1 in response to integrin regulation. Activation of BMX by integrins is mediated by PTK2/FAK1, a key mediator of integrin signaling events leading to the regulation of actin cytoskeleton and cell motility. Plays a critical role in TNF-induced angiogenesis, and implicated in the signaling of TEK and FLT1 receptors, 2 important receptor families essential for angiogenesis. Required for the phosphorylation and activation of STAT3, a transcription factor involved in cell differentiation. Also involved in interleukin-6 (IL6) induced differentiation. Also plays a role in programming adaptive cytoprotection against extracellular stress in different cell systems, salivary epithelial cells, brain endothelial cells, and dermal fibroblasts. May be involved in regulation of endocytosis through its interaction with an endosomal protein RUFY1. May also play a role in the growth and differentiation of hematopoietic cells; as well as in signal transduction in endocardial and arterial endothelial cells. The chain is Cytoplasmic tyrosine-protein kinase BMX (BMX) from Homo sapiens (Human).